The following is a 203-amino-acid chain: Outer-membrane lipoprotein LolB (203 aa).

The signal sequence occupies residues 1–18 (MTLRSFLILLLSSIVLAG). A lipid anchor (N-palmitoyl cysteine) is attached at C19. C19 carries S-diacylglycerol cysteine lipidation.

It belongs to the LolB family. In terms of assembly, monomer.

It is found in the cell outer membrane. Its function is as follows. Plays a critical role in the incorporation of lipoproteins in the outer membrane after they are released by the LolA protein. The sequence is that of Outer-membrane lipoprotein LolB from Vibrio campbellii (strain ATCC BAA-1116).